Reading from the N-terminus, the 444-residue chain is Nuclear envelope integral membrane protein 1 (444 aa).

The N-terminal stretch at 1-43 (MAGGMKVAVSPAVGPGPWGSGVGGGGTVRLLLILSGCLVYGTA) is a signal peptide. The N-linked (GlcNAc...) asparagine glycan is linked to Asn125. Transmembrane regions (helical) follow at residues 161-181 (PKLF…DLLS), 186-206 (FYYS…IIFI), 216-236 (PIYV…QLVF), 245-265 (CYWQ…FAVC), and 289-309 (LCFM…IIIA). The tract at residues 186 to 297 (FYYSTGMTVG…GLCFMYSGIQ (112 aa)) is a; required for its colocalization with lamins at the nuclear envelope. Residues 336 to 405 (PVPPRLLTEE…LTPNEVSVHE (70 aa)) form a b; required for interaction with RAN-GTP region. The tract at residues 336–444 (PVPPRLLTEE…PAITQNNFLT (109 aa)) is required for nuclear localization. Phosphoserine occurs at positions 368, 424, and 425.

The protein belongs to the NEMP family. As to quaternary structure, homooligomer. Interacts with RAN-GTP. Interacts with EMD. Phosphorylation may regulate its interaction with RAN-GTP.

Its subcellular location is the nucleus inner membrane. It localises to the nucleus envelope. Its function is as follows. Together with EMD, contributes to nuclear envelope stiffness in germ cells. Required for female fertility. Essential for normal erythropoiesis. Required for efficient nuclear envelope opening and enucleation during the late stages of erythroblast maturation. This chain is Nuclear envelope integral membrane protein 1 (NEMP1), found in Homo sapiens (Human).